Reading from the N-terminus, the 359-residue chain is 3-dehydroquinate synthase (359 aa).

NAD(+) is bound by residues 71 to 76, 105 to 109, 129 to 130, Lys-142, Lys-151, and 169 to 172; these read DGEQFK, GVIGD, TT, and CLQT. Glu-184, His-247, and His-264 together coordinate Zn(2+).

Belongs to the sugar phosphate cyclases superfamily. Dehydroquinate synthase family. Requires Co(2+) as cofactor. Zn(2+) is required as a cofactor. It depends on NAD(+) as a cofactor.

The protein localises to the cytoplasm. It carries out the reaction 7-phospho-2-dehydro-3-deoxy-D-arabino-heptonate = 3-dehydroquinate + phosphate. It participates in metabolic intermediate biosynthesis; chorismate biosynthesis; chorismate from D-erythrose 4-phosphate and phosphoenolpyruvate: step 2/7. In terms of biological role, catalyzes the conversion of 3-deoxy-D-arabino-heptulosonate 7-phosphate (DAHP) to dehydroquinate (DHQ). The protein is 3-dehydroquinate synthase of Shewanella sp. (strain ANA-3).